The primary structure comprises 883 residues: Lethal(3)malignant brain tumor-like protein 3 (883 aa).

An interaction with RBPJ. Required for transcription repressor activity on Notch target genes region spans residues 1-64 (MTESASSTSG…VKKATATTTW (64 aa)). Over residues 146-156 (HAKDKDQKDER) the composition is skewed to basic and acidic residues. The segment at 146-223 (HAKDKDQKDE…RGDSAVLKQG (78 aa)) is disordered. Composition is skewed to acidic residues over residues 157 to 166 (DGGEDNDEED) and 185 to 194 (DDGEERDDEM). MBT repeat units follow at residues 232–332 (WCWA…LRPP), 340–439 (FNWQ…LITP), and 448–543 (FSWD…LQAP). The CCHHC-type; degenerate zinc-finger motif lies at 549 to 593 (LMEPSETGGCPTLGCRGVGHFKKSRYLGTQSGANCPYSEINLSKE). The tract at residues 595-768 (IFPDRLSGDT…TQQQAQTQQQ (174 aa)) is disordered. Over residues 616–662 (KRMDTRESSSSPETREKHANNFKEDSEKKKENEVKTSAEAKVVREEP) the composition is skewed to basic and acidic residues. A Glycyl lysine isopeptide (Lys-Gly) (interchain with G-Cter in SUMO2) cross-link involves residue Lys-638. Low complexity-rich tracts occupy residues 663 to 742 (TPSV…QQPQ) and 749 to 768 (QPQQVQQAQPTQQQAQTQQQ). Residues 811-875 (WSTDEVSEFI…FNSILMFKAA (65 aa)) enclose the SAM domain.

Interacts with RNF2. Interacts (via SAM domain) with SAMD1 (via SAM domain); the interaction mediates L3MBTL3 binding to chromatin. Interacts with RBPJ; the interaction is required for L3MBTL3 localization to chromatin and is impaired the Notch-derived peptides containing the intracellular domain (NICD). Interacts (via SAM domain) with KDM1A. Interacts with DCAF5. Interacts with DNMT1. Interacts with E2F1. Interacts with SOX2. Interacts with SFMBT1. Detected in hematopoietic progenitor cells in fetal liver. Detected in adult bone marrow, heart, brain, spleen, lung, liver, kidney and testis.

The protein localises to the nucleus. In terms of biological role, is a negative regulator of Notch target genes expression, required for RBPJ-mediated transcriptional repression. It recruits KDM1A to Notch-responsive elements and promotes KDM1A-mediated H3K4me demethylation. Involved in the regulation of ubiquitin-dependent degradation of a set of methylated non-histone proteins, including SOX2. It acts as an adapter recruiting the CRL4-DCAF5 E3 ubiquitin ligase complex to methylated target proteins. Also involved in the regulation of ubiquitin-dependent degradation of methylated DNMT1 and E2F1. Required for normal maturation of myeloid progenitor cells. This chain is Lethal(3)malignant brain tumor-like protein 3, found in Mus musculus (Mouse).